The primary structure comprises 122 residues: Phospholipase A2 crotoxin basic chain (122 aa).

7 cysteine pairs are disulfide-bonded: Cys-26/Cys-115, Cys-28/Cys-44, Cys-43/Cys-95, Cys-49/Cys-122, Cys-50/Cys-88, Cys-57/Cys-81, and Cys-75/Cys-86. 3 residues coordinate Ca(2+): Tyr-27, Gly-29, and Gly-31. His-47 is a catalytic residue. Asp-48 serves as a coordination point for Ca(2+). Asp-89 is a catalytic residue.

As to quaternary structure, heterodimer of one acidic (CA also named crotapotin) and one basic (CB) subunits; non-covalently linked. Requires Ca(2+) as cofactor. Expressed by the venom gland.

Its subcellular location is the secreted. It carries out the reaction a 1,2-diacyl-sn-glycero-3-phosphocholine + H2O = a 1-acyl-sn-glycero-3-phosphocholine + a fatty acid + H(+). Its function is as follows. Heterodimer CA-CB: Crotoxin is a potent presynaptic neurotoxin that possesses phospholipase A2 (PLA2) activity and exerts a lethal action by blocking neuromuscular transmission. It consists of a non-covalent association of a basic and weakly toxic PLA2 subunit (CB), with a small acidic, non-enzymatic and non-toxic subunit (CA also named crotapotin). The complex acts by binding to a specific 48-kDa protein (R48) receptor located on presynaptic membranes, forming a transient ternary complex CA-CB-R48, followed by dissociation of the CA-CB complex and release of the CA subunit. At equilibrium, only the CB subunits remain associated with the specific crotoxin receptor. In addition to neurotoxicity, crotoxin has been found to exert nephrotoxicity, and cardiovascular toxicity. Moreover, anti-inflammatory, immunomodulatory, anti-tumor and analgesic effects of crotoxin have also been reported. Functionally, monomer CB: The basic subunit of crotoxin is a snake venom phospholipase A2 (PLA2) that exhibits weak neurotoxicity and strong anticoagulant effects by binding to factor Xa (F10) and inhibiting the prothrombinase activity. In addition, it exerts myotoxicity, nephrotoxicity, and cardiovascular toxicity as well as anti-inflammatory, immunomodulatory, anti-tumor and analgesic effects. Also shows a strong antimicrobial activity against X.axonopodis passiforae (Gram-negative) which is completely dependent on the enzymatic activity. PLA2 catalyzes the calcium-dependent hydrolysis of the 2- acyl groups in 3-sn-phosphoglycerides. This chain is Phospholipase A2 crotoxin basic chain, found in Crotalus durissus collilineatus (Brazilian rattlesnake).